Consider the following 197-residue polypeptide: Probable chorismate pyruvate-lyase (197 aa).

Substrate is bound by residues Arg77, Leu115, and Glu176.

This sequence belongs to the UbiC family.

Its subcellular location is the cytoplasm. The enzyme catalyses chorismate = 4-hydroxybenzoate + pyruvate. It participates in cofactor biosynthesis; ubiquinone biosynthesis. In terms of biological role, removes the pyruvyl group from chorismate, with concomitant aromatization of the ring, to provide 4-hydroxybenzoate (4HB) for the ubiquinone pathway. The chain is Probable chorismate pyruvate-lyase from Burkholderia ambifaria (strain ATCC BAA-244 / DSM 16087 / CCUG 44356 / LMG 19182 / AMMD) (Burkholderia cepacia (strain AMMD)).